Consider the following 550-residue polypeptide: uncharacterized protein (550 aa).

The first 13 residues, 1-13 (MAGALFEPSFAAA), serve as a signal peptide directing secretion. The tract at residues 312–358 (DAQPDPHLSGDEPPSRPLTPETTLFEALTPDPEPDPPATHAPAELIT) is disordered.

This sequence to M.tuberculosis Rv3776.

This is an uncharacterized protein from Mycobacterium tuberculosis (strain CDC 1551 / Oshkosh).